The sequence spans 721 residues: Polyphosphate kinase (721 aa).

Asparagine 47 is a binding site for ATP. Residues arginine 377 and arginine 407 each contribute to the Mg(2+) site. The active-site Phosphohistidine intermediate is the histidine 437. Residues tyrosine 471, arginine 567, and histidine 595 each coordinate ATP.

Belongs to the polyphosphate kinase 1 (PPK1) family. It depends on Mg(2+) as a cofactor. In terms of processing, an intermediate of this reaction is the autophosphorylated ppk in which a phosphate is covalently linked to a histidine residue through a N-P bond.

It carries out the reaction [phosphate](n) + ATP = [phosphate](n+1) + ADP. Its function is as follows. Catalyzes the reversible transfer of the terminal phosphate of ATP to form a long-chain polyphosphate (polyP). This chain is Polyphosphate kinase, found in Exiguobacterium sp. (strain ATCC BAA-1283 / AT1b).